The primary structure comprises 398 residues: Phosphoglycerate kinase (398 aa).

Substrate contacts are provided by residues 23-25, Arg-38, 61-64, Arg-122, and Arg-155; these read DFN and HMGK. Residues Lys-206, Gly-297, Glu-328, and 354–357 contribute to the ATP site; that span reads GGDS.

The protein belongs to the phosphoglycerate kinase family. As to quaternary structure, monomer.

Its subcellular location is the cytoplasm. The catalysed reaction is (2R)-3-phosphoglycerate + ATP = (2R)-3-phospho-glyceroyl phosphate + ADP. It functions in the pathway carbohydrate degradation; glycolysis; pyruvate from D-glyceraldehyde 3-phosphate: step 2/5. This Clostridium botulinum (strain Loch Maree / Type A3) protein is Phosphoglycerate kinase.